An 889-amino-acid chain; its full sequence is Terminal uridylyltransferase 3 (889 aa).

The C2H2-type; atypical zinc-finger motif lies at 123–151 (VRCDLCAKMIESRDEEQIQEHFQVHHAAL). Residues cysteine 125, cysteine 128, histidine 143, and histidine 148 each coordinate Zn(2+). UTP is bound by residues serine 225 and 236–239 (SDAD). Aspartate 237 and aspartate 239 together coordinate Mg(2+). Residue arginine 286 participates in RNA binding. UTP-binding positions include 394–398 (GVRNS), lysine 419, lysine 423, and 437–438 (SY). One can recognise a PAP-associated domain in the interval 505–572 (LGGLIPLFFL…LCIDDPYEDN (68 aa)). The short motif at 565 to 574 (IDDPYEDNFN) is the Nucleotide recognition motif (NRM) element. Disordered regions lie at residues 675-702 (NNKSKEGDDDAEGVTNNQEGEPPDHVES) and 829-849 (RKKSKGSKKRKNAVRRGNHAG). Over residues 829–846 (RKKSKGSKKRKNAVRRGN) the composition is skewed to basic residues.

It belongs to the DNA polymerase type-B-like family. Requires Mg(2+) as cofactor. Mn(2+) is required as a cofactor.

The protein resides in the cytoplasm. The catalysed reaction is RNA(n) + UTP = RNA(n)-3'-uridine ribonucleotide + diphosphate. In terms of biological role, terminal uridylyltransferase which catalyzes the addition of Us to the 3'-hydroxyl group of single-stranded RNAs. Does not mediate RNA-independent UTP polymerization. In Trypanosoma brucei brucei, this protein is Terminal uridylyltransferase 3.